The chain runs to 867 residues: Probable alpha,alpha-trehalose-phosphate synthase [UDP-forming] 9 (867 aa).

Position 5 is a phosphoserine (S5). T32 is subject to Phosphothreonine. Residues 59 to 546 (ERKIIVANML…AKSFMQDLER (488 aa)) are glycosyltransferase.

The protein in the N-terminal section; belongs to the glycosyltransferase 20 family. This sequence in the C-terminal section; belongs to the trehalose phosphatase family.

It catalyses the reaction D-glucose 6-phosphate + UDP-alpha-D-glucose = alpha,alpha-trehalose 6-phosphate + UDP + H(+). This is Probable alpha,alpha-trehalose-phosphate synthase [UDP-forming] 9 (TPS9) from Arabidopsis thaliana (Mouse-ear cress).